The chain runs to 1034 residues: Translation initiation factor IF-2 (1034 aa).

Disordered stretches follow at residues 118-140 (AAEA…QSVE) and 154-446 (EAEA…NESA). Low complexity-rich tracts occupy residues 162–178 (TPPV…AAAP) and 212–228 (PAVK…PAAS). Over residues 304–315 (DRAREDARRAAE) the composition is skewed to basic and acidic residues. Residues 535-702 (PRAPVVTVMG…NVLLQAEILE (168 aa)) enclose the tr-type G domain. A G1 region spans residues 544–551 (GHVDHGKT). Position 544–551 (544–551 (GHVDHGKT)) interacts with GTP. Residues 569–573 (GITQH) form a G2 region. The segment at 590–593 (DTPG) is G3. GTP contacts are provided by residues 590 to 594 (DTPGH) and 644 to 647 (NKID). Positions 644–647 (NKID) are G4. The G5 stretch occupies residues 680–682 (SAK).

This sequence belongs to the TRAFAC class translation factor GTPase superfamily. Classic translation factor GTPase family. IF-2 subfamily.

It is found in the cytoplasm. One of the essential components for the initiation of protein synthesis. Protects formylmethionyl-tRNA from spontaneous hydrolysis and promotes its binding to the 30S ribosomal subunits. Also involved in the hydrolysis of GTP during the formation of the 70S ribosomal complex. In Bordetella avium (strain 197N), this protein is Translation initiation factor IF-2.